The chain runs to 475 residues: ATP synthase subunit beta (475 aa).

Residue 152 to 159 (GGAGVGKT) coordinates ATP.

It belongs to the ATPase alpha/beta chains family. F-type ATPases have 2 components, CF(1) - the catalytic core - and CF(0) - the membrane proton channel. CF(1) has five subunits: alpha(3), beta(3), gamma(1), delta(1), epsilon(1). CF(0) has three main subunits: a(1), b(2) and c(9-12). The alpha and beta chains form an alternating ring which encloses part of the gamma chain. CF(1) is attached to CF(0) by a central stalk formed by the gamma and epsilon chains, while a peripheral stalk is formed by the delta and b chains.

It is found in the cell membrane. It catalyses the reaction ATP + H2O + 4 H(+)(in) = ADP + phosphate + 5 H(+)(out). In terms of biological role, produces ATP from ADP in the presence of a proton gradient across the membrane. The catalytic sites are hosted primarily by the beta subunits. This chain is ATP synthase subunit beta, found in Wolbachia pipientis wMel.